The following is a 449-amino-acid chain: MDRTTFGRKTFNTQRNRLDRFVAPRDSFSETRRRRSWHAACDVQPINNDIWFGKNLKKKKYTKYLDKALDLESPDKSNSIKRMVQPWPCIPRKKTYLSSADSILDLPTYSYAIFPELLDWSNDNVLVAALGRNYHKWSWRSQSLISQGYAEYQIQCCKFDPRGELLLLGTYMKTVEIHNNVKSKKIDSNTCNCLEKDNRNCSITAVDWSPTGNSFATGCSWGAVTSFTRAAKLISWRHFVREAILLILIALSPNARYLAVTAVNTALVLLLTWPSLEMYSSIDSDWTIRTISWHPWRSALLGVGAVTDDLQARIALWDAPTCKVRDTSIGPKRYRLDAMLFSHRTGELVLSMWNSDRAILHPKACSQLVVMSDPDTMVDQWGEGRSGLDRVRTMVFSPDGTKLATATSDEDLIIWNFLPEDKKMKKTKCRFFSALPEYLDEAMQGYSLR.

WD repeat units lie at residues 108 to 148 (TYSY…ISQG), 149 to 188 (YAEY…KIDS), 198 to 237 (NRNC…ISWR), 283 to 327 (DSDW…VRDT), 345 to 382 (TGEL…DQWG), and 386 to 425 (SGLD…KKMK). Residues 386–397 (SGLDRVRTMVFS) carry the D-box motif.

Belongs to the WD repeat CORT family.

It localises to the cytoplasm. Functionally, controls wing pigmentation patterning by regulating scale cell development, thereby playing a key role in mimicry and crypsis. Probably acts as an activator of the anaphase promoting complex/cyclosome (APC/C) that promotes the ubiquitin ligase activity and substrate specificity of the APC/C. In Heliconius erato (Crimson patched longwing butterfly), this protein is Protein cortex.